A 108-amino-acid polypeptide reads, in one-letter code: Cytochrome bo(3) ubiquinol oxidase subunit 4 (108 aa).

Residues 1–16 are Cytoplasmic-facing; it reads MNKYKKIKNNFDKEKK. The helical transmembrane segment at 17–37 threads the bilayer; sequence SYIVGFLFSLFLTIIPFFCTL. Residues 38–46 lie on the Extracellular side of the membrane; the sequence is NHLFSRKIN. Residues 47–67 form a helical membrane-spanning segment; sequence FFVILLCALSQIIIHFIYFLH. Residues 68–77 lie on the Cytoplasmic side of the membrane; sequence LDFSKKNSWN. The helical transmembrane segment at 78–98 threads the bilayer; the sequence is IISLLFILIIVFIIVFGSIWI. The Extracellular portion of the chain corresponds to 99–108; that stretch reads MYNLNHHVIL.

This sequence belongs to the cytochrome c oxidase bacterial subunit 4 family. As to quaternary structure, heterooctamer of two A chains, two B chains, two C chains and two D chains.

The protein localises to the cell membrane. In terms of biological role, cytochrome bo(3) ubiquinol terminal oxidase is the component of the aerobic respiratory chain of E.coli that predominates when cells are grown at high aeration. Has proton pump activity across the membrane in addition to electron transfer, pumping 2 protons/electron. This Buchnera aphidicola subsp. Schizaphis graminum (strain Sg) protein is Cytochrome bo(3) ubiquinol oxidase subunit 4 (cyoD).